We begin with the raw amino-acid sequence, 1409 residues long: Copia protein (1409 aa).

The segment at 230 to 247 (VKCHHCGREGHIKKDCFH) adopts a CCHC-type zinc-finger fold. Aspartate 292 serves as the catalytic For protease activity. Positions 476–644 (HIKRPLFVVH…TPYEMWHNKK (169 aa)) constitute an Integrase catalytic domain. 2 disordered regions span residues 760–780 (SKES…QTEF) and 805–851 (NESK…NDGI). The span at 827-841 (ESRESETAEHLKEIG) shows a compositional bias: basic and acidic residues.

The chain is Copia protein (GIP) from Drosophila melanogaster (Fruit fly).